A 756-amino-acid polypeptide reads, in one-letter code: MGGRMPLLNVSPLKWPISLKIPAMTVCVAVLSCTTVATFAGITSVATTRSLIEKHLNYVAISMRDALLTKLQATKFEVEGLSANPGLLQLFNNTSVGFAAVSPTDLTAASVDKVESGKFSLAATPTTKFYVDNYQKLDAWLKPLAAKQSYSGILLANAEGAIIYSTGTNPVGPVDANGSINLAIASSANSQEAVMTDFTPPTLSAPGQALYAVAIVHPFIPDKRNGTLLISMSTEMLNAVMGQAKGFGPHSEALIAGSDGKPRSLSSISRDEDAEAVVNSDLLSQGIKTSNFGAQEVLSASQQLKWQDHQWSIIALEPEADVVSASTAMLIKIIGITAATAILALAMAILASRSISGPLAGLVSIMKRLANGDINVRVAGVDRRDEMGEMSRAVLVFRDNAIARVAAEDDARSAEEAMEHDRRMMEMERSERLDEQARVMAQIGGGLAALSDGVFSRPITVDFPEEYRPLKSDFNRALGQLRETIRTVAAQAASMSSIVSEISCATDVLAKRTEHQAIVLDGAVNTMDAISNDVSVTANAANNADALVRDAHSAAAASDEIVSSAIAGMLEIEESSAKIATIVSVIEEIAHQTNLLALNAGVEASRAGEAGKGFAVVASEVRALAQRSSDAAKEIKDLINVSTQRVERGKELVDSASELLKHIAARVDLIRTTVSNIAATATSQAKHLSEFQTTIAEIDQSTQQTAAMAEESDAACRSLNAEAQHLLELIQQFELGGGSSTRQPQSPPTQRYFMSR.

Helical transmembrane passes span 26 to 46 (VCVAVLSCTTVATFAGITSVA) and 330 to 350 (LIKIIGITAATAILALAMAIL). 2 HAMP domains span residues 353-406 (RSIS…ARVA) and 434-486 (DEQA…ETIR). One can recognise a Methyl-accepting transducer domain in the interval 491-720 (QAASMSSIVS…ESDAACRSLN (230 aa)). Positions 736-756 (GGGSSTRQPQSPPTQRYFMSR) are disordered.

It belongs to the methyl-accepting chemotaxis (MCP) protein family.

The protein resides in the cell membrane. In terms of biological role, chemotactic-signal transducers respond to changes in the concentration of attractants and repellents in the environment, transduce a signal from the outside to the inside of the cell, and facilitate sensory adaptation through the variation of the level of methylation. Attractants increase the level of methylation while repellents decrease the level of methylation. The sequence is that of Probable chemoreceptor y4sI from Sinorhizobium fredii (strain NBRC 101917 / NGR234).